A 251-amino-acid chain; its full sequence is Acidic leucine-rich nuclear phosphoprotein 32 family member B (251 aa).

LRR repeat units lie at residues 16-40 (PAAV…LTAE), 43-64 (NLEF…PKLP), and 65-84 (KLKK…DMLA). Residue Lys86 is modified to N6-acetyllysine. An LRR 4 repeat occupies 89–110 (NLTHLNLSGNKLKDISTLEPLK). An LRRCT domain is found at 123 to 161 (CEVTNLNDYRESVFKLLPQLTYLDGYDREDQEAPDSDAE). Over residues 149 to 233 (DREDQEAPDS…DEDEDEEEEE (85 aa)) the composition is skewed to acidic residues. The segment at 149–251 (DREDQEAPDS…RETDDEGEDD (103 aa)) is disordered. Ser158 bears the Phosphoserine mark. Basic and acidic residues predominate over residues 234–244 (GGKGEKRKRET). The Nuclear localization signal motif lies at 239–242 (KRKR). A Phosphothreonine modification is found at Thr244.

It belongs to the ANP32 family. In terms of assembly, interacts with histones H3 and H4. Interacts with KLF5; this interaction induces promoter region-specific histone incorporation and inhibition of histone acetylation by ANP32B. (Microbial infection) Interacts with Sendai virus protein M. As to quaternary structure, (Microbial infection) Interacts with Measles virus protein M. In terms of assembly, (Microbial infection) Interacts with Hendra virus protein M; this interaction promotes nuclear localization of M. (Microbial infection) Interacts with influenza virus B protein PB2; this interaction strongly supports influenza B virus replication. Post-translationally, some glutamate residues are glycylated by TTLL8. This modification occurs exclusively on glutamate residues and results in a glycine chain on the gamma-carboxyl group. In terms of processing, directly cleaved by caspase-3/CASP3. Expressed in heart, lung, pancreas, prostate and in spleen, thymus and placenta.

It localises to the nucleus. Its subcellular location is the cytoplasm. Functionally, multifunctional protein that is involved in the regulation of many processes including cell proliferation, apoptosis, cell cycle progression or transcription. Regulates the proliferation of neuronal stem cells, differentiation of leukemic cells and progression from G1 to S phase of the cell cycle. As negative regulator of caspase-3-dependent apoptosis, may act as an antagonist of ANP32A in regulating tissue homeostasis. Exhibits histone chaperone properties, able to recruit histones to certain promoters, thus regulating the transcription of specific genes. Also plays an essential role in the nucleocytoplasmic transport of specific mRNAs via the uncommon nuclear mRNA export receptor XPO1/CRM1. Participates in the regulation of adequate adaptive immune responses by acting on mRNA expression and cell proliferation. In terms of biological role, (Microbial infection) Plays an essential role in influenza A and B viral genome replication. Also plays a role in foamy virus mRNA export from the nucleus to the cytoplasm. This chain is Acidic leucine-rich nuclear phosphoprotein 32 family member B (ANP32B), found in Homo sapiens (Human).